A 261-amino-acid chain; its full sequence is tRNA pseudouridine synthase A (261 aa).

The Nucleophile role is filled by D51. Y109 is a binding site for substrate.

It belongs to the tRNA pseudouridine synthase TruA family. As to quaternary structure, homodimer.

It carries out the reaction uridine(38/39/40) in tRNA = pseudouridine(38/39/40) in tRNA. In terms of biological role, formation of pseudouridine at positions 38, 39 and 40 in the anticodon stem and loop of transfer RNAs. This chain is tRNA pseudouridine synthase A, found in Tolumonas auensis (strain DSM 9187 / NBRC 110442 / TA 4).